Reading from the N-terminus, the 454-residue chain is Uridine kinase (454 aa).

28–35 (GPSGSGKT) lines the ATP pocket.

The protein belongs to the uridine kinase family.

It localises to the cytoplasm. It is found in the nucleus. It carries out the reaction uridine + ATP = UMP + ADP + H(+). The catalysed reaction is cytidine + ATP = CMP + ADP + H(+). Its pathway is pyrimidine metabolism; CTP biosynthesis via salvage pathway; CTP from cytidine: step 1/3. It participates in pyrimidine metabolism; UMP biosynthesis via salvage pathway; UMP from uridine: step 1/1. Its function is as follows. Catalyzes the conversion of uridine into UMP and cytidine into CMP in the pyrimidine salvage pathway. This is Uridine kinase (urk1) from Schizosaccharomyces pombe (strain 972 / ATCC 24843) (Fission yeast).